The primary structure comprises 465 residues: uncharacterized protein (465 aa).

Disordered stretches follow at residues 1–55 (MNSS…SSHQ), 70–164 (DFSE…VEGQ), and 221–313 (TTDN…KQRV). Residues 40–50 (ENYKDNSDHSN) are compositionally biased toward basic and acidic residues. Over residues 73-82 (ESFNDNQNLK) the composition is skewed to polar residues. Residues 83–134 (NFNTTDNNFNDDYNNDYDSNNDSNNDSNNDSNNDYDNESNNYFNNDSNNDSN) show a composition bias toward low complexity. The segment covering 141 to 150 (ETTKHKLPIE) has biased composition (basic and acidic residues). The segment covering 221–235 (TTDNQSNTESSQENN) has biased composition (low complexity). Composition is skewed to basic and acidic residues over residues 236–249 (VIKKEPNNKLDKQP) and 259–275 (IVPKQETDKKSPVKSIK). Positions 288 to 306 (IDQSNKLGKSYNTNNNNSK) are enriched in polar residues. Residues 390 to 423 (NKASIAELKKMRLEQRKREIEEKRRQVENKKPDS) adopt a coiled-coil conformation.

This is an uncharacterized protein from Acanthamoeba polyphaga mimivirus (APMV).